The primary structure comprises 371 residues: MRSTSLLMQAKAAIPDIKQLPTKHKVSLAYTIHWPHKTVNPNINIKPREPVIFLHGVFGSKKNYRDYCQTIANQNYTPVYSLDFRNHGESEHAFPLVNYSTLTQDVVDFIHEHKLEKVDIVGYSLGAKVALLTLLKHPELCRSGVIIGNAPIKTPQVKVYLKAFIKALKALGDKRPEIKSNDKAWRAKARDVMRKYIPDGDILHYLLRNIDIRKPKNITEYKPGTINFSMPISHFDNKVVEDIADWPEEEVEGLKFEGPVRVIRGTQSVFINDKGLAAYQKHFPNYTLTNFNSNHLIWAERPLQVTKVVSDFLKKTRLLEMDGSAKALEESPKESYSRPPAHQQPLHKNDFTHIDVGALPVNGAQAESTQA.

Residues Ser124 and His295 each act as charge relay system in the active site. The disordered stretch occupies residues 325-352; it reads AKALEESPKESYSRPPAHQQPLHKNDFT. The span at 327-336 shows a compositional bias: basic and acidic residues; the sequence is ALEESPKESY.

The protein belongs to the AB hydrolase superfamily.

Probable alcohol acetyltransferase that uses acetyl-CoA to synthesize acetate esters from various alcohols. Not involved in the synthesis of ethyl acetate. In Cyberlindnera fabianii (Yeast), this protein is Probable alcohol acetyltransferase (EAT2).